A 220-amino-acid chain; its full sequence is MAQEQPKNNEKSAEKTQTKPVIELLIPLEKYLAAGVHIGTHICTKFMEPFVYRVRNDGLYILDVRKIDERIRIAAKFLSRYEPSKIAAVSVRTYGQKPVVKFCNYVGCKPFTGRFMPGTFTNPSLKWYFEPDIVLLTDPRADSQALKEAAEIGIPIVSLADTDNRTEYIDLIIPANNKGRKSLALIYWLLARQILRERGLLPPDGDLPEPPSEFEVKFKR.

The tract at residues 201–220 is disordered; it reads LPPDGDLPEPPSEFEVKFKR.

Belongs to the universal ribosomal protein uS2 family.

The chain is Small ribosomal subunit protein uS2 from Staphylothermus marinus (strain ATCC 43588 / DSM 3639 / JCM 9404 / F1).